We begin with the raw amino-acid sequence, 129 residues long: Ribosome-binding factor A (129 aa).

The protein belongs to the RbfA family. As to quaternary structure, monomer. Binds 30S ribosomal subunits, but not 50S ribosomal subunits or 70S ribosomes.

The protein resides in the cytoplasm. Functionally, one of several proteins that assist in the late maturation steps of the functional core of the 30S ribosomal subunit. Associates with free 30S ribosomal subunits (but not with 30S subunits that are part of 70S ribosomes or polysomes). Required for efficient processing of 16S rRNA. May interact with the 5'-terminal helix region of 16S rRNA. The polypeptide is Ribosome-binding factor A (Thermomicrobium roseum (strain ATCC 27502 / DSM 5159 / P-2)).